The chain runs to 442 residues: Trigger factor (442 aa).

The PPIase FKBP-type domain maps to 165–250 (DDRVIIDFEG…LQKVMAPELP (86 aa)).

This sequence belongs to the FKBP-type PPIase family. Tig subfamily.

It localises to the cytoplasm. The enzyme catalyses [protein]-peptidylproline (omega=180) = [protein]-peptidylproline (omega=0). Its function is as follows. Involved in protein export. Acts as a chaperone by maintaining the newly synthesized protein in an open conformation. Functions as a peptidyl-prolyl cis-trans isomerase. The protein is Trigger factor of Coxiella burnetii (strain RSA 493 / Nine Mile phase I).